The following is a 273-amino-acid chain: Dermonecrotic toxin LsaSicTox-alphaIB1aii (273 aa).

H5 is a catalytic residue. Mg(2+) is bound by residues E25 and D27. H41 functions as the Nucleophile in the catalytic mechanism. 2 disulfides stabilise this stretch: C45–C51 and C47–C190. D85 lines the Mg(2+) pocket.

The protein belongs to the arthropod phospholipase D family. Class II subfamily. Mg(2+) serves as cofactor. Expressed by the venom gland.

It is found in the secreted. It carries out the reaction an N-(acyl)-sphingosylphosphocholine = an N-(acyl)-sphingosyl-1,3-cyclic phosphate + choline. It catalyses the reaction an N-(acyl)-sphingosylphosphoethanolamine = an N-(acyl)-sphingosyl-1,3-cyclic phosphate + ethanolamine. The catalysed reaction is a 1-acyl-sn-glycero-3-phosphocholine = a 1-acyl-sn-glycero-2,3-cyclic phosphate + choline. The enzyme catalyses a 1-acyl-sn-glycero-3-phosphoethanolamine = a 1-acyl-sn-glycero-2,3-cyclic phosphate + ethanolamine. Functionally, dermonecrotic toxins cleave the phosphodiester linkage between the phosphate and headgroup of certain phospholipids (sphingolipid and lysolipid substrates), forming an alcohol (often choline) and a cyclic phosphate. This toxin acts on sphingomyelin (SM). It may also act on ceramide phosphoethanolamine (CPE), lysophosphatidylcholine (LPC) and lysophosphatidylethanolamine (LPE), but not on lysophosphatidylserine (LPS), and lysophosphatidylglycerol (LPG). It acts by transphosphatidylation, releasing exclusively cyclic phosphate products as second products. Induces dermonecrosis, hemolysis, increased vascular permeability, edema, inflammatory response, and platelet aggregation. This Loxosceles sabina (Tucson recluse spider) protein is Dermonecrotic toxin LsaSicTox-alphaIB1aii.